A 160-amino-acid chain; its full sequence is Transcription elongation factor GreA (160 aa).

The stretch at Met-1 to Ile-71 forms a coiled coil.

This sequence belongs to the GreA/GreB family.

Functionally, necessary for efficient RNA polymerase transcription elongation past template-encoded arresting sites. The arresting sites in DNA have the property of trapping a certain fraction of elongating RNA polymerases that pass through, resulting in locked ternary complexes. Cleavage of the nascent transcript by cleavage factors such as GreA or GreB allows the resumption of elongation from the new 3'terminus. GreA releases sequences of 2 to 3 nucleotides. The protein is Transcription elongation factor GreA of Streptococcus pyogenes serotype M3 (strain ATCC BAA-595 / MGAS315).